A 563-amino-acid polypeptide reads, in one-letter code: Arginine--tRNA ligase (563 aa).

The short motif at 121–131 is the 'HIGH' region element; sequence PNIAKPFSIGH.

This sequence belongs to the class-I aminoacyl-tRNA synthetase family. Monomer.

It is found in the cytoplasm. It catalyses the reaction tRNA(Arg) + L-arginine + ATP = L-arginyl-tRNA(Arg) + AMP + diphosphate. This Streptococcus pneumoniae serotype 19F (strain G54) protein is Arginine--tRNA ligase.